The chain runs to 1227 residues: Methionine synthase (1227 aa).

The Hcy-binding domain maps to 2–325 (SSKVEQLRAQ…EHIAAMSRAV (324 aa)). Zn(2+) contacts are provided by Cys-247, Cys-310, and Cys-311. The Pterin-binding domain maps to 356-617 (FVNVGERTNV…LPAELRDAVE (262 aa)). Residues 650-744 (QQAEWRSWDV…FIEASKEKGS (95 aa)) form the B12-binding N-terminal domain. Residues Glu-694, 756 to 760 (GDVHD), His-759, Ser-804, Thr-808, and Ala-860 contribute to the methylcob(III)alamin site. In terms of domain architecture, B12-binding spans 746-881 (NGKMVIATVK…SDTQRDDFVA (136 aa)). The 331-residue stretch at 897 to 1227 (KKPRTPPVTL…LAPNLGYDAD (331 aa)) folds into the AdoMet activation domain. S-adenosyl-L-methionine is bound by residues Asp-946, Arg-1134, and 1189–1190 (YF).

Belongs to the vitamin-B12 dependent methionine synthase family. The cofactor is methylcob(III)alamin. It depends on Zn(2+) as a cofactor.

The catalysed reaction is (6S)-5-methyl-5,6,7,8-tetrahydrofolate + L-homocysteine = (6S)-5,6,7,8-tetrahydrofolate + L-methionine. The protein operates within amino-acid biosynthesis; L-methionine biosynthesis via de novo pathway; L-methionine from L-homocysteine (MetH route): step 1/1. Catalyzes the transfer of a methyl group from methyl-cobalamin to homocysteine, yielding enzyme-bound cob(I)alamin and methionine. Subsequently, remethylates the cofactor using methyltetrahydrofolate. This is Methionine synthase (metH) from Salmonella typhimurium (strain LT2 / SGSC1412 / ATCC 700720).